Here is an 89-residue protein sequence, read N- to C-terminus: Small ribosomal subunit protein uS15 (89 aa).

Belongs to the universal ribosomal protein uS15 family. In terms of assembly, part of the 30S ribosomal subunit. Forms a bridge to the 50S subunit in the 70S ribosome, contacting the 23S rRNA.

Functionally, one of the primary rRNA binding proteins, it binds directly to 16S rRNA where it helps nucleate assembly of the platform of the 30S subunit by binding and bridging several RNA helices of the 16S rRNA. Its function is as follows. Forms an intersubunit bridge (bridge B4) with the 23S rRNA of the 50S subunit in the ribosome. The protein is Small ribosomal subunit protein uS15 of Sodalis glossinidius (strain morsitans).